Reading from the N-terminus, the 57-residue chain is uncharacterized protein (57 aa).

Positions 1–20 (MKKLALILFMGTLVSFYADA) are cleaved as a signal peptide.

This is an uncharacterized protein from Escherichia coli (strain K12).